Here is a 239-residue protein sequence, read N- to C-terminus: Fatty acid metabolism regulator protein (239 aa).

The 69-residue stretch at 6-74 (KGPASFAEKY…HGKPTQVNNF (69 aa)) folds into the HTH gntR-type domain. The segment at residues 34–53 (ERELSELIGVTRTTLREVLQ) is a DNA-binding region (H-T-H motif).

Homodimer.

It is found in the cytoplasm. Multifunctional regulator of fatty acid metabolism. The protein is Fatty acid metabolism regulator protein of Shewanella denitrificans (strain OS217 / ATCC BAA-1090 / DSM 15013).